Consider the following 81-residue polypeptide: Photosystem I iron-sulfur center (81 aa).

4Fe-4S ferredoxin-type domains follow at residues 2–31 (AHSVKIYDTCIGCTQCVRACPTDVLEMIPW) and 39–68 (IASAPRTEDCVGCKRCESACPTDFLSVRVY). Residues Cys-11, Cys-14, Cys-17, Cys-21, Cys-48, Cys-51, Cys-54, and Cys-58 each contribute to the [4Fe-4S] cluster site.

As to quaternary structure, the eukaryotic PSI reaction center is composed of at least 11 subunits. [4Fe-4S] cluster is required as a cofactor.

The protein resides in the plastid. Its subcellular location is the chloroplast thylakoid membrane. It carries out the reaction reduced [plastocyanin] + hnu + oxidized [2Fe-2S]-[ferredoxin] = oxidized [plastocyanin] + reduced [2Fe-2S]-[ferredoxin]. Functionally, apoprotein for the two 4Fe-4S centers FA and FB of photosystem I (PSI); essential for photochemical activity. FB is the terminal electron acceptor of PSI, donating electrons to ferredoxin. The C-terminus interacts with PsaA/B/D and helps assemble the protein into the PSI complex. Required for binding of PsaD and PsaE to PSI. PSI is a plastocyanin-ferredoxin oxidoreductase, converting photonic excitation into a charge separation, which transfers an electron from the donor P700 chlorophyll pair to the spectroscopically characterized acceptors A0, A1, FX, FA and FB in turn. This is Photosystem I iron-sulfur center from Zygnema circumcarinatum (Green alga).